The following is a 650-amino-acid chain: Growth hormone receptor (650 aa).

The signal sequence occupies residues Met1–Ala24. Residues Thr25 to Gln273 lie on the Extracellular side of the membrane. 2 disulfide bridges follow: Cys56-Cys66 and Cys109-Cys120. N-linked (GlcNAc...) asparagine glycosylation is present at Asn123. Cys134 and Cys148 form a disulfide bridge. The 104-residue stretch at Pro159–Thr262 folds into the Fibronectin type-III domain. Residues Asn164, Asn169, and Asn208 are each glycosylated (N-linked (GlcNAc...) asparagine). Positions Tyr248–Ser252 match the WSXWS motif motif. The chain crosses the membrane as a helical span at residues Phe274 to Ser297. The Cytoplasmic portion of the chain corresponds to Lys298–Gln650. Residues Lys303–Ala390 form a required for JAK2 binding region. Residues Ile306 to Lys314 carry the Box 1 motif motif. The UbE motif motif lies at Asp349–Asp358. Ser350 carries the phosphoserine modification. The segment at Lys466–Met486 is disordered. Residues Leu470–Met486 are compositionally biased toward polar residues. A phosphotyrosine mark is found at Tyr498 and Tyr606.

It belongs to the type I cytokine receptor family. Type 1 subfamily. As to quaternary structure, on growth hormone (GH) binding, forms homodimers and binds JAK2 via a box 1-containing domain. Post-translationally, the soluble form (GHBP) is produced by phorbol ester-promoted proteolytic cleavage at the cell surface (shedding) by ADAM17/TACE. Shedding is inhibited by growth hormone (GH) binding to the receptor probably due to a conformational change in GHR rendering the receptor inaccessible to ADAM17. On GH binding, phosphorylated on tyrosine residues in the cytoplasmic domain by JAK2. In terms of processing, ubiquitinated by the ECS(SOCS2) complex following ligand-binding and phosphorylation by JAK2, leading to its degradation by the proteasome. Regulation by the ECS(SOCS2) complex acts as a negative feedback loop of growth hormone receptor signaling. Ubiquitination is not sufficient for GHR internalization. In terms of tissue distribution, expressed in all tissues tested including, liver, heart, adipose tissue, mammary gland, testes, ovary, brain, kidney and muscle. Highest levels in liver.

It localises to the cell membrane. The protein resides in the secreted. Receptor for pituitary gland growth hormone (GH1) involved in regulating postnatal body growth. On ligand binding, couples to the JAK2/STAT5 pathway. In terms of biological role, the soluble form (GHBP) acts as a reservoir of growth hormone in plasma and may be a modulator/inhibitor of GH signaling. In Mus musculus (Mouse), this protein is Growth hormone receptor (Ghr).